A 246-amino-acid chain; its full sequence is Small ribosomal subunit protein uS2 (246 aa).

The protein belongs to the universal ribosomal protein uS2 family.

The polypeptide is Small ribosomal subunit protein uS2 (Burkholderia thailandensis (strain ATCC 700388 / DSM 13276 / CCUG 48851 / CIP 106301 / E264)).